A 424-amino-acid chain; its full sequence is Microcin H47 secretion protein MchE (424 aa).

Topologically, residues 1–25 are cytoplasmic; it reads MFRQDALENRKMKWQGRAILLPGIP. A helical transmembrane segment spans residues 26–46; sequence LWLIMLGSIVFITAFLMFIIV. Topologically, residues 47 to 424 are periplasmic; it reads GTYSRRVNVS…KHSATGPLND (378 aa).

It belongs to the membrane fusion protein (MFP) (TC 8.A.1) family.

Its subcellular location is the cell inner membrane. In terms of biological role, probably involved, in conjunction with MchF, in the secretion of microcin H47. This chain is Microcin H47 secretion protein MchE (mchE), found in Escherichia coli.